A 692-amino-acid polypeptide reads, in one-letter code: Elongation factor G (692 aa).

One can recognise a tr-type G domain in the interval 8 to 283 (NRIRNIGIAA…AVIDYLPAPT (276 aa)). Residues 17–24 (AHIDAGKT), 81–85 (DTPGH), and 135–138 (NKMD) each bind GTP.

It belongs to the TRAFAC class translation factor GTPase superfamily. Classic translation factor GTPase family. EF-G/EF-2 subfamily.

It localises to the cytoplasm. In terms of biological role, catalyzes the GTP-dependent ribosomal translocation step during translation elongation. During this step, the ribosome changes from the pre-translocational (PRE) to the post-translocational (POST) state as the newly formed A-site-bound peptidyl-tRNA and P-site-bound deacylated tRNA move to the P and E sites, respectively. Catalyzes the coordinated movement of the two tRNA molecules, the mRNA and conformational changes in the ribosome. The protein is Elongation factor G of Helicobacter pylori (strain G27).